Reading from the N-terminus, the 95-residue chain is Integration host factor subunit beta (95 aa).

This sequence belongs to the bacterial histone-like protein family. In terms of assembly, heterodimer of an alpha and a beta chain.

Its function is as follows. This protein is one of the two subunits of integration host factor, a specific DNA-binding protein that functions in genetic recombination as well as in transcriptional and translational control. In Psychromonas ingrahamii (strain DSM 17664 / CCUG 51855 / 37), this protein is Integration host factor subunit beta.